The sequence spans 27 residues: U18-ctenitoxin-Co1a (27 aa).

It belongs to the u18-CNTX family. In terms of tissue distribution, expressed by the venom gland.

The protein localises to the secreted. Its function is as follows. Not toxic to mice by intracerebroventricular injection. This chain is U18-ctenitoxin-Co1a, found in Ctenus ornatus (Brazilian spider).